The sequence spans 229 residues: Cytosolic-abundant heat soluble protein 107838 (229 aa).

The tract at residues 1–29 (MSAEAMNMNMNQDAVFIPPPEGEQYERKE) is disordered. Residues 109–145 (LSANYQKEVERKTEAYRKQQEVEADKIRKELEKQHLR) adopt a coiled-coil conformation. CAHS motif stretches follow at residues 124–142 (YRKQ…LEKQ) and 161–179 (QKKM…MDRE). Residues 202–218 (SSAAGTETGGQVVSESQ) are compositionally biased toward polar residues. Positions 202–229 (SSAAGTETGGQVVSESQKFTERNRQIKQ) are disordered. The segment covering 219-229 (KFTERNRQIKQ) has biased composition (basic and acidic residues).

Belongs to the Cytosolic-abundant heat soluble protein (CAHS) family.

It localises to the cytoplasm. Functionally, CAHS proteins are cytosolic heat soluble proteins that seem to contribute to the anhydrobiosis in tardigrades, but their specific mechanisms are yet to be identified. It is possible that protection during anhydrobiosis might occur via the stabilization of vitrifying small molecules such as sugars, but not via the direct glass transition of CAHS proteins themselves. This Paramacrobiotus richtersi (Water bear) protein is Cytosolic-abundant heat soluble protein 107838.